The sequence spans 574 residues: Probable inactive serine/threonine-protein kinase slob2 (574 aa).

Residues 6 to 26 (YIIIAAVGGFAILTFIIIVVL) form a helical membrane-spanning segment. One can recognise a Protein kinase domain in the interval 166 to 346 (YADRGSLRDF…PLHRLTYTSR (181 aa)). N-linked (GlcNAc...) asparagine glycosylation occurs at asparagine 358. Residues 366 to 386 (SKPNSKDLSQPKLKDLKKQKK) form a disordered region. Residues asparagine 440, asparagine 449, asparagine 453, asparagine 456, asparagine 464, asparagine 470, asparagine 477, and asparagine 483 are each glycosylated (N-linked (GlcNAc...) asparagine). The segment covering 450-493 (TTTNTTNTSTSSSLNSSFNSNVSTSYSNATTTTNTTSASSVSPP) has biased composition (low complexity). The tract at residues 450–574 (TTTNTTNTST…DKSGPLLKKS (125 aa)) is disordered. The segment covering 494–539 (ISSPPPPPPPPPPSKSSGPPPPPPPPPKSSGPPPPPPPKSSPPPPA) has biased composition (pro residues). Low complexity predominate over residues 546-556 (LLSSIESFSSS).

The protein belongs to the protein kinase superfamily. Ser/Thr protein kinase family.

It localises to the membrane. The polypeptide is Probable inactive serine/threonine-protein kinase slob2 (slob2) (Dictyostelium discoideum (Social amoeba)).